A 170-amino-acid chain; its full sequence is Cathelicidin antimicrobial peptide (170 aa).

An N-terminal signal peptide occupies residues 1 to 30 (MKTQRDGPSLGRWSLLLLLLGLTMPLAVIG). A propeptide spans 31 to 131 (RVLSYQEAVL…DISCDKDKRK (101 aa)) (cathelin-like domain (CLD)). The tract at residues 31–131 (RVLSYQEAVL…DISCDKDKRK (101 aa)) is cathelin-like domain (CLD). 2 disulfide bridges follow: Cys86/Cys97 and Cys108/Cys125. The segment at 150–162 (LKKIGQKIKDFFG) is active core.

Belongs to the cathelicidin family. In terms of assembly, monomer, homodimer or homotrimer (in vitro). Oligomerizes as tetra- or hexamer in solution (in vitro). Proteolytically cleaved by proteinase PRTN3 into antibacterial peptide LL-37. Proteolytically cleaved by cathepsin CTSG and neutrophil elastase ELANE. In terms of processing, resistant to proteolytic degradation in solution, and when bound to both zwitterionic (mimicking mammalian membranes) and negatively charged membranes (mimicking bacterial membranes). Post-translationally, after secretion onto the skin surface, the CAMP gene product is processed by a serine protease-dependent mechanism into multiple novel antimicrobial peptides distinct from and shorter than cathelicidin LL-37. These peptides show enhanced antimicrobial action, acquiring the ability to kill skin pathogens such as S.aureus, E.coli and C.albicans. These peptides have lost the ability to stimulate CXCL8/IL8 release from keratinocytes. The peptides act synergistically, killing bacteria at lower concentrations when present together, and maintain activity at increased salt condition.

It is found in the secreted. Its subcellular location is the vesicle. Functionally, antimicrobial protein that is an integral component of the innate immune system. Binds to bacterial lipopolysaccharides (LPS). Acts via neutrophil N-formyl peptide receptors to enhance the release of CXCL2. Postsecretory processing generates multiple cathelicidin antimicrobial peptides with various lengths which act as a topical antimicrobial defense in sweat on skin. The unprocessed precursor form, cathelicidin antimicrobial peptide, inhibits the growth of Gram-negative E.coli and E.aerogenes with efficiencies comparable to that of the mature peptide LL-37 (in vitro). Antimicrobial peptide that is an integral component of the innate immune system. Binds to bacterial lipopolysaccharides (LPS). Causes membrane permeabilization by forming transmembrane pores (in vitro). Causes lysis of E.coli. Exhibits antimicrobial activity against Gram-negative bacteria such as P.aeruginosa, S.typhimurium, E.aerogenes, E.coli and P.syringae, Gram-positive bacteria such as L.monocytogenes, S.epidermidis, S.pyogenes and S.aureus, as well as vancomycin-resistant enterococci (in vitro). Exhibits antimicrobial activity against methicillin-resistant S.aureus, P.mirabilis, and C.albicans in low-salt media, but not in media containing 100 mM NaCl (in vitro). Forms chiral supramolecular assemblies with quinolone signal (PQS) molecules of P.aeruginosa, which may lead to interference of bacterial quorum signaling and perturbance of bacterial biofilm formation. May form supramolecular fiber-like assemblies on bacterial membranes. Induces cytokine and chemokine producation as well as TNF/TNFA and CSF2/GMCSF production in normal human keratinocytes. Exhibits hemolytic activity against red blood cells. Its function is as follows. Exhibits antimicrobial activity against E.coli and B.megaterium (in vitro). The chain is Cathelicidin antimicrobial peptide from Saguinus oedipus (Cotton-top tamarin).